Consider the following 716-residue polypeptide: Fusoxypene synthase (716 aa).

The sesterterpenoid synthase stretch occupies residues 4–328 (LSYQSRLIPP…WLSACSRQNT (325 aa)). Asp96 lines the Mg(2+) pocket. Asp96 serves as a coordination point for substrate. Positions 187–190 (RMTN) are substrate. Asn231 is a substrate binding site. The interval 235–239 (SYERE) is substrate. Residues 329–711 (WKTNCSIDGK…CLATLSMEGC (383 aa)) are geranylfarnesyl diphosphate synthase. Isopentenyl diphosphate contacts are provided by Lys422, Arg425, and His454. Positions 461 and 465 each coordinate Mg(2+). Residue Arg470 participates in dimethylallyl diphosphate binding. Arg471 is an isopentenyl diphosphate binding site. Dimethylallyl diphosphate contacts are provided by Lys548, Thr549, Gln587, Asn594, and Lys602.

This sequence in the N-terminal section; belongs to the terpene synthase family. In the C-terminal section; belongs to the FPP/GGPP synthase family.

The catalysed reaction is 4 isopentenyl diphosphate + dimethylallyl diphosphate = (2E,6E,10E,14E)-geranylfarnesyl diphosphate + 4 diphosphate. It catalyses the reaction (2E,6E,10E,14E)-geranylfarnesyl diphosphate = fusoxypene A + diphosphate. It carries out the reaction (2E,6E,10E,14E)-geranylfarnesyl diphosphate = fusoxypene B + diphosphate. The enzyme catalyses (2E,6E,10E,14E)-geranylfarnesyl diphosphate = fusoxypene C + diphosphate. The catalysed reaction is (2E,6E,10E,14E)-geranylfarnesyl diphosphate = (-)-astellatene + diphosphate. Functionally, bifunctional sesterterpenoid synthase that performs both prenyl transferase and terpene cyclase activity, converting isopentenyl diphosphate and dimethylallyl diphosphate into geranylfarnesyl diphosphate (GFPP) and then converting GFPP into the enantiomeric sesterterpenes with a 5-6-7-3-5 ring system fusoxypene A, fusoxypene B, fusoxypene C and (-)-astellatene. The polypeptide is Fusoxypene synthase (Fusarium oxysporum (Fusarium vascular wilt)).